The chain runs to 787 residues: Protocadherin beta-15 (787 aa).

The N-terminal stretch at 1-26 (MEPAGERFPEQRQVLILLLLLEVTLA) is a signal peptide. The Extracellular portion of the chain corresponds to 27 to 690 (GWEPRRYSVM…AQADSLTVYL (664 aa)). Cadherin domains follow at residues 35 to 133 (VMEE…SPEF), 138 to 242 (MTLK…APEF), 247 to 347 (YEVQ…FPEL), 352 to 451 (LTSP…APAF), and 456 to 561 (YTLF…SPFV). A glycan (N-linked (GlcNAc...) asparagine) is linked at asparagine 418. An N-linked (GlcNAc...) asparagine glycan is attached at asparagine 567. Residues 568–671 (GSAPCTELVP…LVDGFSQPYL (104 aa)) enclose the Cadherin 6 domain. A helical transmembrane segment spans residues 691 to 711 (VVALASVSSLFLFSVFLFVAV). The Cytoplasmic portion of the chain corresponds to 712–787 (RLCRRSRAAS…DSRRKSEFLE (76 aa)).

The protein localises to the cell membrane. Functionally, potential calcium-dependent cell-adhesion protein. May be involved in the establishment and maintenance of specific neuronal connections in the brain. In Homo sapiens (Human), this protein is Protocadherin beta-15 (PCDHB15).